The sequence spans 265 residues: 4-hydroxy-tetrahydrodipicolinate reductase (265 aa).

Residues 7 to 12 (GASGRM) and D33 contribute to the NAD(+) site. R34 serves as a coordination point for NADP(+). NAD(+) is bound by residues 96–98 (GTT) and 120–123 (AANM). Catalysis depends on H153, which acts as the Proton donor/acceptor. H154 is a (S)-2,3,4,5-tetrahydrodipicolinate binding site. K157 serves as the catalytic Proton donor. A (S)-2,3,4,5-tetrahydrodipicolinate-binding site is contributed by 163–164 (GT).

The protein belongs to the DapB family.

It is found in the cytoplasm. It carries out the reaction (S)-2,3,4,5-tetrahydrodipicolinate + NAD(+) + H2O = (2S,4S)-4-hydroxy-2,3,4,5-tetrahydrodipicolinate + NADH + H(+). It catalyses the reaction (S)-2,3,4,5-tetrahydrodipicolinate + NADP(+) + H2O = (2S,4S)-4-hydroxy-2,3,4,5-tetrahydrodipicolinate + NADPH + H(+). Its pathway is amino-acid biosynthesis; L-lysine biosynthesis via DAP pathway; (S)-tetrahydrodipicolinate from L-aspartate: step 4/4. Functionally, catalyzes the conversion of 4-hydroxy-tetrahydrodipicolinate (HTPA) to tetrahydrodipicolinate. This is 4-hydroxy-tetrahydrodipicolinate reductase from Burkholderia multivorans (strain ATCC 17616 / 249).